The chain runs to 229 residues: Triosephosphate isomerase (229 aa).

9–11 (NLK) provides a ligand contact to substrate. The active-site Electrophile is the histidine 93. Glutamate 141 functions as the Proton acceptor in the catalytic mechanism. Substrate is bound by residues isoleucine 146, glycine 181, and 202-203 (AS).

Belongs to the triosephosphate isomerase family. Homotetramer; dimer of dimers.

The protein resides in the cytoplasm. The enzyme catalyses D-glyceraldehyde 3-phosphate = dihydroxyacetone phosphate. It participates in carbohydrate biosynthesis; gluconeogenesis. It functions in the pathway carbohydrate degradation; glycolysis; D-glyceraldehyde 3-phosphate from glycerone phosphate: step 1/1. Functionally, involved in the gluconeogenesis. Catalyzes stereospecifically the conversion of dihydroxyacetone phosphate (DHAP) to D-glyceraldehyde-3-phosphate (G3P). This chain is Triosephosphate isomerase, found in Pyrobaculum islandicum (strain DSM 4184 / JCM 9189 / GEO3).